The following is a 479-amino-acid chain: Glutamyl-tRNA reductase (479 aa).

Substrate-binding positions include threonine 48–arginine 51, serine 104, glutamate 109–glutamine 111, and glutamine 115. Cysteine 49 serves as the catalytic Nucleophile. Glycine 189–glycine 194 lines the NADP(+) pocket. The tract at residues aspartate 417–glutamate 455 is disordered.

This sequence belongs to the glutamyl-tRNA reductase family. As to quaternary structure, homodimer.

It carries out the reaction (S)-4-amino-5-oxopentanoate + tRNA(Glu) + NADP(+) = L-glutamyl-tRNA(Glu) + NADPH + H(+). It participates in porphyrin-containing compound metabolism; protoporphyrin-IX biosynthesis; 5-aminolevulinate from L-glutamyl-tRNA(Glu): step 1/2. Catalyzes the NADPH-dependent reduction of glutamyl-tRNA(Glu) to glutamate 1-semialdehyde (GSA). In Salinibacter ruber (strain DSM 13855 / M31), this protein is Glutamyl-tRNA reductase.